The primary structure comprises 134 residues: Large ribosomal subunit protein uL16c (134 aa).

Belongs to the universal ribosomal protein uL16 family. In terms of assembly, part of the 50S ribosomal subunit.

The protein localises to the plastid. It localises to the chloroplast. This is Large ribosomal subunit protein uL16c from Gnetum parvifolium (Small-leaved jointfir).